A 155-amino-acid chain; its full sequence is Small ribosomal subunit protein uS7c (155 aa).

The protein belongs to the universal ribosomal protein uS7 family. In terms of assembly, part of the 30S ribosomal subunit.

Its subcellular location is the plastid. It is found in the chloroplast. One of the primary rRNA binding proteins, it binds directly to 16S rRNA where it nucleates assembly of the head domain of the 30S subunit. This Saururus cernuus (Lizard's tail) protein is Small ribosomal subunit protein uS7c (rps7).